Consider the following 586-residue polypeptide: MKQSVSAEQIELKSSLPGSKKVYVDGPREGMKVPMREIEQSDTNGVPNPPIRVYDTSGPYTDPAYKVELEKGIPTPRHSWILERGDVEAYEGREVKPEDDGVKVASKHTPVFPQMDRKPLRAKQGANVTQMHYARNGIITSEMEYVAIREGVDPEFVRKEIAEGRAILPANINHPEAEPMIIGRNFHVKVNANIGNSAVSSSIAEEVEKMTWATRWGADTIMDLSTGKNIHTTREWIIRNAPVPVGTVPIYQALEKVNGIAEDLTWEVYRDTLIEQAEQGVDYFTIHAGVLLRYIPITAKRTTGIVSRGGSIMAQWCLFHHKENFLYTHFEEICEIMKQYDVSFSLGDGLRPGSIADANDEAQFSELETLGELTKIAWKHDVQVMIEGPGHVPMHLIKENMEKELDICQGAPFYTLGPLTTDIAPGYDHITSAIGAAMIGWFGTAMLCYVTPKEHLGLPNKDDVREGVITYKIAAHAADLAKGHKTAHQRDDALSKARFEFRWRDQFNLSLDPERAMEYHDETLPAEGAKTAHFCSMCGPKFCSMRISHDIREYAKENDLETTEAIEKGMKEKAKEFKETGSHLYQ.

A disordered region spans residues 1 to 59 (MKQSVSAEQIELKSSLPGSKKVYVDGPREGMKVPMREIEQSDTNGVPNPPIRVYDTSGP). Over residues 22–39 (VYVDGPREGMKVPMREIE) the composition is skewed to basic and acidic residues. Substrate contacts are provided by residues asparagine 193, methionine 222, tyrosine 251, histidine 287, 307-309 (SRG), 348-351 (DGLR), and glutamate 387. Residue histidine 391 coordinates Zn(2+). Position 414 (tyrosine 414) interacts with substrate. Histidine 455 contacts Zn(2+). Residues cysteine 535, cysteine 538, and cysteine 543 each contribute to the [4Fe-4S] cluster site.

This sequence belongs to the ThiC family. [4Fe-4S] cluster is required as a cofactor.

It catalyses the reaction 5-amino-1-(5-phospho-beta-D-ribosyl)imidazole + S-adenosyl-L-methionine = 4-amino-2-methyl-5-(phosphooxymethyl)pyrimidine + CO + 5'-deoxyadenosine + formate + L-methionine + 3 H(+). It functions in the pathway cofactor biosynthesis; thiamine diphosphate biosynthesis. In terms of biological role, catalyzes the synthesis of the hydroxymethylpyrimidine phosphate (HMP-P) moiety of thiamine from aminoimidazole ribotide (AIR) in a radical S-adenosyl-L-methionine (SAM)-dependent reaction. This Bacillus cereus (strain ZK / E33L) protein is Phosphomethylpyrimidine synthase.